We begin with the raw amino-acid sequence, 311 residues long: Glutaminase (311 aa).

Residues S66, N116, E162, N169, Y193, Y245, and V263 each contribute to the substrate site.

It belongs to the glutaminase family. As to quaternary structure, homotetramer.

The enzyme catalyses L-glutamine + H2O = L-glutamate + NH4(+). The sequence is that of Glutaminase from Rhodopseudomonas palustris (strain BisB5).